The following is an 830-amino-acid chain: Heavy metal tolerance protein (830 aa).

The N-terminal stretch at 1–27 (MVLRYNSPRLNILELVLLYVGFFSIGS) is a signal peptide. 3 helical membrane-spanning segments follow: residues 51-71 (PIGIISWWILGIALTYVVDIS), 88-108 (TTVVCLILFLLFWIIVLISCA), and 126-146 (LSVLYVWAIDIVFETIFIVYS). Asn-150 carries N-linked (GlcNAc...) asparagine glycosylation. Helical transmembrane passes span 156 to 176 (IVLADHVARLVLCVFATAIYL), 263 to 283 (FQIFICIVLLFLGRAVNILAP), and 304 to 324 (DVILFVIYRFLQGNMGVIGSL). Positions 265–550 (IFICIVLLFL…FGTLYRSLQN (286 aa)) constitute an ABC transmembrane type-1 domain. The N-linked (GlcNAc...) asparagine glycan is linked to Asn-350. The next 2 helical transmembrane spans lie at 381-401 (VVFQIGPVLLDLGVAMVYFFI) and 403-423 (FDIYFTLIVLIMTLCYCYVTV). Glutathione-binding positions include 429 to 433 (RTEAR), 492 to 495 (NIVQ), and Gly-542. A helical membrane pass occupies residues 490 to 511 (FLNIVQGGIFTFSLAIACLLSA). Residues 584-818 (VIFSHVSFAY…DGGAYKKMWF (235 aa)) enclose the ABC transporter domain. Residues Tyr-593 and 617-628 (GESGGGKSTIMR) each bind ATP.

The protein belongs to the ABC transporter superfamily. ABCB family. Heavy Metal importer (TC 3.A.1.210) subfamily.

The protein resides in the vacuole membrane. In terms of biological role, involved in metal tolerance. Probably involved in the transport of metal-bound phytochelatins. Compartmentalizes cadmium within vacuoles, thereby protecting cells from cadmium toxicity. This Schizosaccharomyces pombe (strain 972 / ATCC 24843) (Fission yeast) protein is Heavy metal tolerance protein (hmt1).